A 229-amino-acid chain; its full sequence is 23 kDa piroplasm membrane protein (229 aa).

The N-terminal stretch at 1 to 19 (MNKYFKVFFFVLLTHALKS) is a signal peptide. Over 20–203 (ALIFGQATLQ…EKEDTNKKKY (184 aa)) the chain is Extracellular. A helical membrane pass occupies residues 204-224 (VLMVVVVVVFVVVASLVVFLV). Residues 225–229 (KFCLK) are Cytoplasmic-facing.

It is found in the membrane. The chain is 23 kDa piroplasm membrane protein from Theileria parva (East coast fever infection agent).